The sequence spans 758 residues: Probable serine/threonine-protein kinase HAL5-like (758 aa).

Disordered stretches follow at residues 1–170 and 189–252; these read MGTV…SADD and IDNA…HRGR. The span at 22–57 shows a compositional bias: polar residues; that stretch reads RSISGSIKSLFKPSSVQNSTPTVSPHESSPPLGNSD. Basic and acidic residues predominate over residues 58-69; the sequence is NLKKLVDTKRAE. Residues 129-153 show a composition bias toward low complexity; the sequence is SSPRQSSSTNDRSSITSATSSVTSA. Residues 216–226 are compositionally biased toward basic and acidic residues; the sequence is DKNFESSEYEI. Positions 227 to 247 are enriched in polar residues; sequence RSNSLSRIHSTPQNESPTVNN. A Protein kinase domain is found at 442 to 744; the sequence is KSMGVVLGHG…IDQLLQSPWM (303 aa). ATP-binding positions include 448–456 and K485; that span reads LGHGAYGVV. D595 (proton acceptor) is an active-site residue.

This sequence belongs to the protein kinase superfamily. CAMK Ser/Thr protein kinase family. NPR/HAL subfamily. HAL5 sub-subfamily.

The catalysed reaction is L-seryl-[protein] + ATP = O-phospho-L-seryl-[protein] + ADP + H(+). It catalyses the reaction L-threonyl-[protein] + ATP = O-phospho-L-threonyl-[protein] + ADP + H(+). The protein is Probable serine/threonine-protein kinase HAL5-like of Vanderwaltozyma polyspora (strain ATCC 22028 / DSM 70294 / BCRC 21397 / CBS 2163 / NBRC 10782 / NRRL Y-8283 / UCD 57-17) (Kluyveromyces polysporus).